The sequence spans 109 residues: MLTAENIQLNCYETVYILKSDLNEDKTLSIINDYKSMLTNGGAKNIVLQHRGRRHLSYTINDYHDGIYVQVNYEGNGQLVKSFEKSLRFDDNIIRYLTNKQKRNIKKDS.

It belongs to the bacterial ribosomal protein bS6 family.

It is found in the plastid. Its subcellular location is the chloroplast. In terms of biological role, binds together with bS18 to 16S ribosomal RNA. In Pyropia yezoensis (Susabi-nori), this protein is Small ribosomal subunit protein bS6c.